The sequence spans 504 residues: Maturase K (504 aa).

This sequence belongs to the intron maturase 2 family. MatK subfamily.

It localises to the plastid. Its subcellular location is the chloroplast. Its function is as follows. Usually encoded in the trnK tRNA gene intron. Probably assists in splicing its own and other chloroplast group II introns. This Bombax buonopozense (Red-flowered silk cotton tree) protein is Maturase K.